An 801-amino-acid polypeptide reads, in one-letter code: Glycerol-3-phosphate acyltransferase 2, mitochondrial (801 aa).

The segment at 1–24 (MDTMLKSNPQTQQRSNHNGQETSL) is disordered. Topologically, residues 1–305 (MDTMLKSNPQ…PGPRLSALGQ (305 aa)) are cytoplasmic. Residues 180 to 290 (QLHKGQMKMV…SGQPLLIFLE (111 aa)) form an acyltransferase region. The short motif at 205-210 (HKSLLD) is the HXXXXD motif element. A helical membrane pass occupies residues 306-332 (AWLGVVIQAVQAGIISDATLVPVAIAY). The Mitochondrial intermembrane portion of the chain corresponds to 333-449 (DLVPDAPCNM…QLLVRRLSRH (117 aa)). The helical transmembrane segment at 450–472 (VLSASVASSAVMSTAIMATLLLL) threads the bilayer. Residues 473 to 801 (KHQKGVVLSQ…EQFIRQFICS (329 aa)) are Cytoplasmic-facing. The residue at position 662 (Ser-662) is a Phosphoserine. Thr-666 is modified (phosphothreonine). 2 positions are modified to phosphoserine: Ser-668 and Ser-670.

It belongs to the GPAT/DAPAT family. In terms of assembly, interacts with PIWIL2. Highly expressed in the testis. Expressed at lower levels in the heart, liver, kidney, spleen and adipose cells. Only detected in primary spermatocytes.

It localises to the mitochondrion outer membrane. The enzyme catalyses sn-glycerol 3-phosphate + an acyl-CoA = a 1-acyl-sn-glycero-3-phosphate + CoA. It catalyses the reaction a 1-acyl-sn-glycero-3-phosphate + an acyl-CoA = a 1,2-diacyl-sn-glycero-3-phosphate + CoA. It carries out the reaction 1-(9Z-octadecenoyl)-sn-glycero-3-phosphate + (9Z)-octadecenoyl-CoA = 1,2-di-(9Z-octadecenoyl)-sn-glycero-3-phosphate + CoA. The catalysed reaction is 1-(9Z-octadecenoyl)-sn-glycero-3-phosphate + (5Z,8Z,11Z,14Z)-eicosatetraenoyl-CoA = 1-(9Z)-octadecenoyl-2-(5Z,8Z,11Z,14Z)-eicosatetraenoyl-sn-glycero-3-phosphate + CoA. The enzyme catalyses (5Z,8Z,11Z,14Z)-eicosatetraenoyl-CoA + sn-glycerol 3-phosphate = 1-(5Z,8Z,11Z,14Z-eicosatetraenoyl)-sn-glycero-3-phosphate + CoA. It participates in phospholipid metabolism; CDP-diacylglycerol biosynthesis; CDP-diacylglycerol from sn-glycerol 3-phosphate: step 1/3. Inhibited by N-ethylmaleimide (NEM). Its function is as follows. Transfers an acyl-group from acyl-ACP to the sn-1 position of glycerol-3-phosphate producing a lysophosphatidic acid (LPA), an essential step for the triacylglycerol (TAG) and glycerophospholipids. In vitro also transfers an acyl-group from acyl-ACP to the LPA producing a phosphatidic acid (PA). Prefers arachidonoyl-CoA as the acyl donor. Required for primary processing step during piRNA biosynthesis. Molecular mechanisms by which it promotes piRNA biosynthesis are unclear and do not involve its acyltransferase activity. In Mus musculus (Mouse), this protein is Glycerol-3-phosphate acyltransferase 2, mitochondrial.